Here is a 443-residue protein sequence, read N- to C-terminus: Endoplasmic reticulum protein SC65 (443 aa).

A signal peptide spans 1 to 18; that stretch reads MARAAWGLLWLLLGSAGA. Residues 81–102 are disordered; sequence SGPATSQPRPAPGPDGDNEGDG. Asn-367 carries N-linked (GlcNAc...) asparagine glycosylation. 3 stretches are compositionally biased toward acidic residues: residues 387-398, 407-419, and 431-443; these read DEMELEETESLP, AEFE…EEGL, and GDED…PELA. The interval 387 to 443 is disordered; the sequence is DEMELEETESLPEPEKPLSDAEFEGEGDYEEGLYADWWQEPDAKGDEDEAEPEPELA.

The protein belongs to the leprecan family. In terms of assembly, interacts with PLOD1, P3H3 and PPIB. Identified in a complex with PLOD1 and P3H3. In terms of tissue distribution, found in testis, brain, heart and at a much lower level in liver.

The protein resides in the endoplasmic reticulum. In terms of biological role, part of a complex composed of PLOD1, P3H3 and P3H4 that catalyzes hydroxylation of lysine residues in collagen alpha chains and is required for normal assembly and cross-linking of collagen fibrils. Required for normal bone density and normal skin stability via its role in hydroxylation of lysine residues in collagen alpha chains and in collagen fibril assembly. The polypeptide is Endoplasmic reticulum protein SC65 (Rattus norvegicus (Rat)).